Consider the following 312-residue polypeptide: Glyoxylate/hydroxypyruvate reductase A (312 aa).

The active site involves Arg-227. His-275 functions as the Proton donor in the catalytic mechanism.

The protein belongs to the D-isomer specific 2-hydroxyacid dehydrogenase family. GhrA subfamily.

The protein localises to the cytoplasm. The enzyme catalyses glycolate + NADP(+) = glyoxylate + NADPH + H(+). The catalysed reaction is (R)-glycerate + NAD(+) = 3-hydroxypyruvate + NADH + H(+). It carries out the reaction (R)-glycerate + NADP(+) = 3-hydroxypyruvate + NADPH + H(+). Its function is as follows. Catalyzes the NADPH-dependent reduction of glyoxylate and hydroxypyruvate into glycolate and glycerate, respectively. The protein is Glyoxylate/hydroxypyruvate reductase A of Escherichia coli O127:H6 (strain E2348/69 / EPEC).